Here is a 252-residue protein sequence, read N- to C-terminus: Chitooligosaccharide deacetylase (252 aa).

His-61 and His-125 together coordinate Mg(2+).

This sequence belongs to the YdjC deacetylase family. ChbG subfamily. In terms of assembly, homodimer. Mg(2+) serves as cofactor.

It localises to the cytoplasm. It carries out the reaction N,N'-diacetylchitobiose + H2O = N-acetyl-beta-D-glucosaminyl-(1-&gt;4)-D-glucosamine + acetate. The catalysed reaction is diacetylchitobiose-6'-phosphate + H2O = N'-monoacetylchitobiose-6'-phosphate + acetate. The protein operates within glycan degradation; chitin degradation. Involved in the degradation of chitin. ChbG is essential for growth on the acetylated chitooligosaccharides chitobiose and chitotriose but is dispensable for growth on cellobiose and chitosan dimer, the deacetylated form of chitobiose. Deacetylation of chitobiose-6-P and chitotriose-6-P is necessary for both the activation of the chb promoter by the regulatory protein ChbR and the hydrolysis of phosphorylated beta-glucosides by the phospho-beta-glucosidase ChbF. Catalyzes the removal of only one acetyl group from chitobiose-6-P to yield monoacetylchitobiose-6-P, the inducer of ChbR and the substrate of ChbF. In Salmonella newport (strain SL254), this protein is Chitooligosaccharide deacetylase.